The sequence spans 250 residues: Electron transfer flavoprotein subunit beta (250 aa).

It belongs to the ETF beta-subunit/FixA family. Heterodimer of an alpha and a beta subunit. FAD is required as a cofactor. Requires AMP as cofactor.

The protein resides in the mitochondrion matrix. In terms of biological role, the electron transfer flavoprotein serves as a specific electron acceptor for several dehydrogenases, including five acyl-CoA dehydrogenases, glutaryl-CoA and sarcosine dehydrogenase. It transfers the electrons to the main mitochondrial respiratory chain via ETF-ubiquinone oxidoreductase (ETF dehydrogenase). The protein is Electron transfer flavoprotein subunit beta (etfb) of Dictyostelium discoideum (Social amoeba).